Consider the following 215-residue polypeptide: Pyrophosphate-energized proton pump 2 (215 aa).

5 helical membrane-spanning segments follow: residues 16-36 (VYPL…TFFV), 51-71 (GLIA…YATV), 86-106 (GTNL…IVVI), 136-156 (GLAV…GGII), and 164-184 (LFGT…IVAL).

The protein belongs to the H(+)-translocating pyrophosphatase (TC 3.A.10) family. As to quaternary structure, homodimer. Requires Mg(2+) as cofactor.

The protein localises to the cell inner membrane. It catalyses the reaction diphosphate + H2O + H(+)(in) = 2 phosphate + 2 H(+)(out). Proton pump that utilizes the energy of pyrophosphate hydrolysis as the driving force for proton movement across the membrane. Generates a proton motive force. The protein is Pyrophosphate-energized proton pump 2 (hppA2) of Rhizobium leguminosarum bv. trifolii.